The chain runs to 1477 residues: Neurexin-1 (1477 aa).

The first 30 residues, 1 to 30 (MGTALLQRGGCFLLCLSLLLLGCWAELGSG), serve as a signal peptide directing secretion. Residues 31–217 (LEFPGAEGQW…PPNSGGGSPC (187 aa)) enclose the Laminin G-like 1 domain. At 31–1401 (LEFPGAEGQW…EVIRESSSTT (1371 aa)) the chain is on the extracellular side. Asparagine 125 and asparagine 190 each carry an N-linked (GlcNAc...) asparagine glycan. The tract at residues 198 to 221 (DSGEVKLDDEPPNSGGGSPCEAGE) is disordered. Residues 213–256 (GGSPCEAGEEGEGGVCLNGGVCSVVDDQAVCDCSRTGFRGKDCS) enclose the EGF-like 1 domain. 2 disulfides stabilise this stretch: cysteine 228-cysteine 243 and cysteine 245-cysteine 255. 2 Laminin G-like domains span residues 283-473 (IATF…AFKC) and 480-672 (DPIT…KPSC). Ca(2+)-binding residues include aspartate 329, leucine 346, and methionine 407. Intrachain disulfides connect cysteine 437–cysteine 473, cysteine 643–cysteine 672, cysteine 680–cysteine 691, cysteine 685–cysteine 700, and cysteine 702–cysteine 712. Positions 676-713 (TAKPCLSNPCKNNGMCRDGWNRYVCDCSGTGYLGRSCE) constitute an EGF-like 2 domain. Laminin G-like domains follow at residues 718–891 (VLSY…IDYC) and 905–1080 (DPVT…ERGC). 2 residues coordinate Ca(2+): aspartate 765 and leucine 782. Asparagine 790 is a glycosylation site (N-linked (GlcNAc...) asparagine). Residue arginine 841 coordinates Ca(2+). 5 disulfides stabilise this stretch: cysteine 883-cysteine 891, cysteine 1052-cysteine 1080, cysteine 1087-cysteine 1098, cysteine 1092-cysteine 1107, and cysteine 1109-cysteine 1119. Residues 1083-1120 (PSTTCQEDSCSNQGVCLQQWDGFSCDCSMTSFSGPLCN) form the EGF-like 3 domain. In terms of domain architecture, Laminin G-like 6 spans 1126 to 1294 (YIFSKGGGQI…DANIAIVGNV (169 aa)). Residues aspartate 1176 and valine 1193 each coordinate Ca(2+). A glycan (N-linked (GlcNAc...) asparagine) is linked at asparagine 1223. Residues isoleucine 1245 and asparagine 1247 each coordinate Ca(2+). The interval 1325-1390 (TTTLATSTAR…AGGREPYPGS (66 aa)) is disordered. An O-linked (Xyl...) (heparan sulfate) serine glycan is attached at serine 1355. Residues 1402 to 1422 (GMVVGIVAAAALCILILLYAM) form a helical membrane-spanning segment. Over 1423–1477 (YKYRNRDEGSYHVDESRNYISNSAQSNGAVVKEKQPSSAKSSNKNKKNKDKEYYV) the chain is Cytoplasmic. Residues 1444–1470 (NSAQSNGAVVKEKQPSSAKSSNKNKKN) form an interaction with CASK region. Residues 1444 to 1477 (NSAQSNGAVVKEKQPSSAKSSNKNKKNKDKEYYV) form a disordered region.

The protein belongs to the neurexin family. As to quaternary structure, interacts (via laminin G-like domain 2 and/or laminin G-like domain 6) with NLGN1 forming a heterotetramer, where one NLGN1 dimer interacts with one NRXN1 dimer. Also interacts (via laminin G-like domain 2 and/or laminin G-like domain 6) with NLGN2, NLGN3 and NLGN4L; interactions with NLGN1, NLGN2, NLGN3 and NLGN4L are calcium-dependent. Interacts (via cytoplasmic C-terminal region) with CASK (via the PDZ, SH3 and guanylate kinase-like domains). Interacts (via cytoplasmic C-terminus) with CASKIN1 and APBA1. Interacts (via laminin G-like domain 2) with NXPH1 and NXPH3. Alpha-type isoforms (neurexin-1-alpha) interact (via laminin G-like domain 2 and/or laminin G-like domain 6) with DAG1 (via alpha-dystroglycan chain). Interacts with LRRTM1, LRRTM2, LRRTM3 and LRRTM4. Interacts with SYT13 and SYTL1. Interacts with CBLN1, CBLN2 and, less avidly, with CBLN4. Interacts with CLSTN3. Post-translationally, O-glycosylated; contains heparan sulfate. Heparan sulfate attachment is required for synapse development by mediating interactions with neuroligins and LRRTM2. In terms of tissue distribution, brain.

Its subcellular location is the presynaptic cell membrane. Cell surface protein involved in cell-cell-interactions, exocytosis of secretory granules and regulation of signal transmission. Function is isoform-specific. Alpha-type isoforms have a long N-terminus with six laminin G-like domains and play an important role in synaptic signal transmission. Alpha-type isoforms play a role in the regulation of calcium channel activity and Ca(2+)-triggered neurotransmitter release at synapses and at neuromuscular junctions. They play an important role in Ca(2+)-triggered exocytosis of secretory granules in pituitary gland. They may affect their functions at synapses and in endocrine cells via their interactions with proteins from the exocytotic machinery. Likewise, alpha-type isoforms play a role in regulating the activity of postsynaptic NMDA receptors, a subtype of glutamate-gated ion channels. Both alpha-type and beta-type isoforms may play a role in the formation or maintenance of synaptic junctions via their interactions (via the extracellular domains) with neuroligin family members, CBLN1 or CBLN2. In vitro, triggers the de novo formation of presynaptic structures. May be involved in specification of excitatory synapses. Alpha-type isoforms were first identified as receptors for alpha-latrotoxin from spider venom. In Homo sapiens (Human), this protein is Neurexin-1 (NRXN1).